Consider the following 110-residue polypeptide: Host transcription reprogramming factor 2 (110 aa).

A signal peptide spans 1-18; that stretch reads MHLKASSILALLVIGANA. The segment at 68 to 96 adopts a C2H2-type zinc-finger fold; sequence IMCGYCGKRFWNKPDLEKHIKLKPSKGGH. Positions 88 to 110 are disordered; sequence KLKPSKGGHKGQPYKEHSWNRPT. Residues 100–110 show a composition bias toward basic and acidic residues; that stretch reads PYKEHSWNRPT.

Its subcellular location is the secreted. It is found in the host nucleus. Functionally, secreted effector that translocates into the nuclei of host cells to reprogram the expression of immunity-associated genes by binding to effector binding elements (EBEs) in rice. Binds the 5'-CCACCTCC-3' EBE of promoters from targeted rice genes and probably recruits a yet to be determined host repressor. Causes ambivalent immunity with increased susceptibility to the hemibiotrophic pathogens Magnaporthe oryzae and Xanthomonas oryzae pv. oryzae, but enhances resistance to Cochliobolus miyabeanus, a necrotrophic pathogen. This is Host transcription reprogramming factor 2 from Pyricularia oryzae (strain 70-15 / ATCC MYA-4617 / FGSC 8958) (Rice blast fungus).